The following is a 403-amino-acid chain: MKLPVSILFFISVSQILAFNNVIVTQKEVEIGVGETASITFQIKNHTSSTLNQTRIQLSQSPYITNPDVVLVDNWWANVTVSGERPVAGEILEALNCTTDGEEVCSLDLLDAYSRITVIRSHWLAILIQIVGWTYFAAWSVSFYPQMYLNFKRKSVVGLNFDFLSLNLVGFGAYAMFNLLMYYNSHVKNIYSMENPRSPPPVLLNDVVFAVHAFLACFVTILQCIFYERDQQRISTKCIILIIGLVSFGFVSVVVTVLNKITILDFVVSLSYIKMAVTCCKYFPQAYFNYQRKSTVGWSIGNILLDFTGGSLDILQMVLQAINVNDWSAFYANPVKFGLGFVSIFFDIIFMIQHYALYPDAEVPHNEYHGVDNPDPDSIVRDAEHGAADNESMESTDPIIVHD.

Residues 1–122 (MKLPVSILFF…YSRITVIRSH (122 aa)) are Lumenal-facing. Residues asparagine 45, asparagine 52, asparagine 78, and asparagine 96 are each glycosylated (N-linked (GlcNAc...) asparagine). Residues 123–143 (WLAILIQIVGWTYFAAWSVSF) traverse the membrane as a helical segment. Residues 124 to 190 (LAILIQIVGW…MYYNSHVKNI (67 aa)) form the PQ-loop 1 domain. Residues 144 to 162 (YPQMYLNFKRKSVVGLNFD) lie on the Cytoplasmic side of the membrane. The chain crosses the membrane as a helical span at residues 163-183 (FLSLNLVGFGAYAMFNLLMYY). The Lumenal portion of the chain corresponds to 184-206 (NSHVKNIYSMENPRSPPPVLLND). The helical transmembrane segment at 207–227 (VVFAVHAFLACFVTILQCIFY) threads the bilayer. Residues 228 to 237 (ERDQQRISTK) are Cytoplasmic-facing. Residues 238-258 (CIILIIGLVSFGFVSVVVTVL) traverse the membrane as a helical segment. At 259–260 (NK) the chain is on the lumenal side. A helical membrane pass occupies residues 261–283 (ITILDFVVSLSYIKMAVTCCKYF). In terms of domain architecture, PQ-loop 2 spans 266–326 (FVVSLSYIKM…MVLQAINVND (61 aa)). Topologically, residues 284–294 (PQAYFNYQRKS) are cytoplasmic. The helical transmembrane segment at 295–315 (TVGWSIGNILLDFTGGSLDIL) threads the bilayer. Over 316-336 (QMVLQAINVNDWSAFYANPVK) the chain is Lumenal. Residues 337-357 (FGLGFVSIFFDIIFMIQHYAL) form a helical membrane-spanning segment. Over 358–403 (YPDAEVPHNEYHGVDNPDPDSIVRDAEHGAADNESMESTDPIIVHD) the chain is Cytoplasmic. Basic and acidic residues predominate over residues 374 to 388 (PDPDSIVRDAEHGAA). A disordered region spans residues 374 to 403 (PDPDSIVRDAEHGAADNESMESTDPIIVHD).

This sequence belongs to the cystinosin family.

It is found in the lysosome membrane. The protein resides in the cytoplasmic vesicle. It localises to the phagosome. The enzyme catalyses L-cystine(out) + H(+)(out) = L-cystine(in) + H(+)(in). Cystine/H(+) symporter that mediates export of cystine, the oxidized dimer of cysteine, from lysosomes. May play a role in the degradation of engulfed apoptotic cells. This Caenorhabditis briggsae protein is Cystinosin homolog (ctns-1).